The primary structure comprises 1466 residues: ABC transporter G family member 10 (1466 aa).

Residues 23–45 (NTPQYENNNNNNNNTSGNESPNI) show a composition bias toward low complexity. Residues 23–47 (NTPQYENNNNNNNNTSGNESPNILN) are disordered. The 255-residue stretch at 138–392 (VTIFNLFRPS…FLDLGFDCEP (255 aa)) folds into the ABC transporter 1 domain. The ABC transmembrane type-2 1 domain occupies 497 to 724 (WGDRFALISK…NGSTMSYQDQ (228 aa)). 6 helical membrane passes run 501–521 (FALI…ASLF), 537–557 (AIYA…GLTF), 586–606 (IPLT…MYGL), 611–631 (GKFF…VAFF), 641–661 (LYVS…YGGY), and 767–787 (IITF…LELF). An ABC transporter 2 domain is found at 838–1082 (FTWNHIHYTV…LTSYFERNGV (245 aa)). 874-881 (GSSGAGKT) provides a ligand contact to ATP. The region spanning 1177 to 1399 (SYVYGIFTQA…LTCKEYFKPT (223 aa)) is the ABC transmembrane type-2 2 domain. Transmembrane regions (helical) follow at residues 1178-1198 (YVYG…FTFW), 1214-1234 (IFEI…QFLI), 1253-1273 (FAIS…TICF), 1290-1310 (FYFY…GQVV), 1319-1339 (LAQT…GVLV), and 1440-1460 (YGIL…FVYL).

It belongs to the ABC transporter superfamily. ABCG family. PDR (TC 3.A.1.205) subfamily.

It is found in the membrane. This chain is ABC transporter G family member 10 (abcG10), found in Dictyostelium discoideum (Social amoeba).